A 112-amino-acid chain; its full sequence is Frizzy aggregation protein FrzB (112 aa).

Necessary for proper aggregation of cells to form fruiting bodies. FRZ genes define a system of signal transduction analogous to the enterobacterial chemotaxis systems. This Myxococcus xanthus protein is Frizzy aggregation protein FrzB (frzB).